A 419-amino-acid polypeptide reads, in one-letter code: Transcription factor 7 (419 aa).

Over residues 1 to 12 (MPQLDSGGGGAG) the composition is skewed to gly residues. Residues 1–60 (MPQLDSGGGGAGRGDDLGAPDELLAFQDEGEEQDDKNRDSPVGPERDLAELKSSLVNESE) form a CTNNB1-binding region. 2 disordered regions span residues 1-111 (MPQL…LKAP) and 134-200 (PASG…SGFY). Composition is skewed to basic and acidic residues over residues 35–50 (DKNR…DLAE) and 86–109 (LGRE…DGLK). Residues 143–158 (QPQPPLHNKPGQPPHG) show a composition bias toward pro residues. Residues 304-372 (IKKPLNAFML…LHMQLYPGWS (69 aa)) constitute a DNA-binding region (HMG box). The disordered stretch occupies residues 374 to 406 (RDNYGKKKRRSREKHQESTTGGKRNAFGTYPEK). A Nuclear localization signal motif is present at residues 379–385 (KKKRRSR).

Belongs to the TCF/LEF family. As to quaternary structure, binds the armadillo repeat of CTNNB1 and forms a stable complex. Binds TLE5, TLE1, TLE2, TLE3 and TLE4. Interacts with MLLT11. Interacts with DAZAP2. Interacts (via N-terminus) with SOX13; inhibits WNT-mediated transcriptional activity. In terms of tissue distribution, T-cell specific. Expressed in triple negative 2 subpopulations of T-cells and both the gamma-delta and alpha-beta T-cell lineages. Expressed in Il7 receptor positive innate-like T-cells in the mesenteric lymph nodes and spleen (at protein level).

It localises to the nucleus. Its function is as follows. Transcriptional activator involved in T-cell lymphocyte differentiation. Necessary for the survival of CD4(+) CD8(+) immature thymocytes. Isoforms lacking the N-terminal CTNNB1 binding domain cannot fulfill this role. Binds to the T-lymphocyte-specific enhancer element (5'-WWCAAAG-3') found in the promoter of the CD3E gene. Represses expression of the T-cell receptor gamma gene in alpha-beta T-cell lineages. Inhibits the developmental program of IL17A effector gamma-delta T-cell subsets via regulating the transcription of T-cell lineage effector proteins. Required for the development of natural killer receptor-positive lymphoid tissue inducer T-cells. TLE1, TLE2, TLE3 and TLE4 repress transactivation mediated by TCF7 and CTNNB1. May also act as feedback transcriptional repressor of CTNNB1 and TCF7L2 target genes. The polypeptide is Transcription factor 7 (Mus musculus (Mouse)).